Here is a 102-residue protein sequence, read N- to C-terminus: UPF0213 protein Spro_0507 (102 aa).

Positions 6 to 81 constitute a GIY-YIG domain; that stretch reads PTWHLYMLRM…KQLSKTQKER (76 aa).

It belongs to the UPF0213 family.

In Serratia proteamaculans (strain 568), this protein is UPF0213 protein Spro_0507.